The sequence spans 393 residues: Phosphoglycerate kinase (393 aa).

Residues 21 to 23 (DLN), arginine 36, 59 to 62 (HLGR), arginine 113, and arginine 146 each bind substrate. ATP-binding positions include lysine 197, glutamate 319, and 345-348 (GGDT).

This sequence belongs to the phosphoglycerate kinase family. As to quaternary structure, monomer.

It is found in the cytoplasm. The catalysed reaction is (2R)-3-phosphoglycerate + ATP = (2R)-3-phospho-glyceroyl phosphate + ADP. It participates in carbohydrate degradation; glycolysis; pyruvate from D-glyceraldehyde 3-phosphate: step 2/5. The polypeptide is Phosphoglycerate kinase (Nitratidesulfovibrio vulgaris (strain DP4) (Desulfovibrio vulgaris)).